A 358-amino-acid chain; its full sequence is Peptide chain release factor 1 (358 aa).

Gln233 is subject to N5-methylglutamine.

It belongs to the prokaryotic/mitochondrial release factor family. Post-translationally, methylated by PrmC. Methylation increases the termination efficiency of RF1.

Its subcellular location is the cytoplasm. Its function is as follows. Peptide chain release factor 1 directs the termination of translation in response to the peptide chain termination codons UAG and UAA. The chain is Peptide chain release factor 1 from Clostridium botulinum (strain Loch Maree / Type A3).